The sequence spans 222 residues: uncharacterized protein (222 aa).

The tat-type signal signal peptide spans 1–27 (MSFTRRKFVLGMGTVIFFTGSASSLLA). 3 consecutive 4Fe-4S ferredoxin-type domains span residues 37–66 (YAMI…PAQG), 83–114 (TQYH…RDEQ), and 115–144 (GIVR…LNPV). Residues cysteine 46, cysteine 49, cysteine 52, cysteine 56, cysteine 92, cysteine 95, cysteine 100, cysteine 104, cysteine 124, cysteine 127, cysteine 130, cysteine 134, cysteine 151, cysteine 154, cysteine 167, and cysteine 171 each contribute to the [4Fe-4S] cluster site.

Predicted to be exported by the Tat system. The position of the signal peptide cleavage has not been experimentally proven.

This is an uncharacterized protein from Escherichia coli O157:H7.